The chain runs to 140 residues: MAVVLPAVVEELLSEMAAAVQESARIPDEYLLSLKFLFGSSATQALDLVDRQSITLISSPSGRRVYQVLGSSSKTYTCLASCHYCSCPAFAFSVLRKSDSILCKHLLAVYLSQVMRTCQQLSVSDKQLTDILLMEKKQEA.

The SWIM-type zinc finger occupies 66–114; that stretch reads YQVLGSSSKTYTCLASCHYCSCPAFAFSVLRKSDSILCKHLLAVYLSQV.

It belongs to the SWS1 family. As to quaternary structure, interacts with RAD51D and XRCC3; involved in homologous recombination repair. Interacts with SWSAP1; they form a functional complex involved in homologous recombination repair and stabilize each other. Expressed in ovary and testis.

It is found in the nucleus. Functionally, involved in early stages of the homologous recombination repair (HRR) pathway of double-stranded DNA breaks arising during DNA replication or induced by DNA-damaging agents. Required for meiotic progression, hence for fertility. The chain is Zinc finger SWIM domain-containing protein 7 (ZSWIM7) from Homo sapiens (Human).